Reading from the N-terminus, the 354-residue chain is Uroporphyrinogen decarboxylase (354 aa).

Residues 28–32 (RQAGR), aspartate 78, tyrosine 155, serine 210, and histidine 325 each bind substrate.

The protein belongs to the uroporphyrinogen decarboxylase family. Homodimer.

The protein localises to the cytoplasm. The enzyme catalyses uroporphyrinogen III + 4 H(+) = coproporphyrinogen III + 4 CO2. The protein operates within porphyrin-containing compound metabolism; protoporphyrin-IX biosynthesis; coproporphyrinogen-III from 5-aminolevulinate: step 4/4. In terms of biological role, catalyzes the decarboxylation of four acetate groups of uroporphyrinogen-III to yield coproporphyrinogen-III. The sequence is that of Uroporphyrinogen decarboxylase from Trichodesmium erythraeum (strain IMS101).